A 351-amino-acid polypeptide reads, in one-letter code: Probable protein phosphatase 2C 41 (351 aa).

The PPM-type phosphatase domain maps to 62-348 (FTSICSNRGE…DDISVLCLFF (287 aa)). Mn(2+) contacts are provided by Asp-98, Gly-99, Asp-293, and Asp-339.

The protein belongs to the PP2C family. Requires Mg(2+) as cofactor. Mn(2+) is required as a cofactor.

It catalyses the reaction O-phospho-L-seryl-[protein] + H2O = L-seryl-[protein] + phosphate. The catalysed reaction is O-phospho-L-threonyl-[protein] + H2O = L-threonyl-[protein] + phosphate. This chain is Probable protein phosphatase 2C 41, found in Arabidopsis thaliana (Mouse-ear cress).